The primary structure comprises 312 residues: Glyoxylate/hydroxypyruvate reductase A (312 aa).

Residue arginine 227 is part of the active site. Catalysis depends on histidine 275, which acts as the Proton donor.

This sequence belongs to the D-isomer specific 2-hydroxyacid dehydrogenase family. GhrA subfamily.

The protein localises to the cytoplasm. It carries out the reaction glycolate + NADP(+) = glyoxylate + NADPH + H(+). The catalysed reaction is (R)-glycerate + NAD(+) = 3-hydroxypyruvate + NADH + H(+). It catalyses the reaction (R)-glycerate + NADP(+) = 3-hydroxypyruvate + NADPH + H(+). Catalyzes the NADPH-dependent reduction of glyoxylate and hydroxypyruvate into glycolate and glycerate, respectively. The protein is Glyoxylate/hydroxypyruvate reductase A of Escherichia coli O81 (strain ED1a).